The following is a 412-amino-acid chain: MVDLEQLGQQAQQASYTLGLLSTAQKNQVLTAMATALTSHQDEILAANAQDLENPQVPVKFVDRLRLTADRIQDMAIGLKQVVSLPDPIGNVDRAWRNEAGLMIAKERVPLGVIGMIFEARPNVTVDASALCFKTGNAVILRGGKEALHSNQALVQVLRGALRAEAVDENAIQLITDTSHATAAKFMQLTDYVDVLIPRGSARLIQTVLAKATVPVIETGAGNCHVYVDKDAQLQMATDIVINGKVQRPSVCNATEKLLIHREVAADYLPSMIQALREQGVEVRGDAATQAIVPDVVPATDADWGTEYNDLIIAVKVVDSEAAAITHINRYNTQHSEAIVTDNYQAGKLFQQRVNAACVYINASTRFTDGFEFGFGAEIGISTQKLHARGPMGLAELTSYKYVIDGNGQIRH.

It belongs to the gamma-glutamyl phosphate reductase family.

The protein localises to the cytoplasm. The catalysed reaction is L-glutamate 5-semialdehyde + phosphate + NADP(+) = L-glutamyl 5-phosphate + NADPH + H(+). The protein operates within amino-acid biosynthesis; L-proline biosynthesis; L-glutamate 5-semialdehyde from L-glutamate: step 2/2. Catalyzes the NADPH-dependent reduction of L-glutamate 5-phosphate into L-glutamate 5-semialdehyde and phosphate. The product spontaneously undergoes cyclization to form 1-pyrroline-5-carboxylate. The chain is Gamma-glutamyl phosphate reductase from Lactiplantibacillus plantarum (strain ATCC BAA-793 / NCIMB 8826 / WCFS1) (Lactobacillus plantarum).